A 723-amino-acid chain; its full sequence is Envelope glycoprotein H (723 aa).

A signal peptide spans 1-23; it reads MSPATRFTVISCLVVSLITPSET. The Virion surface segment spans residues 24–700; it reads SSWFDPFIEW…IIDIRQTSIF (677 aa). 4 N-linked (GlcNAc...) asparagine; by host glycosylation sites follow: Asn-39, Asn-45, Asn-144, and Asn-174. Residues 197-263 form an interaction with gL region; it reads HQFAIVLTFT…QSYRDDLLIV (67 aa). Residues Asn-270, Asn-340, Asn-411, Asn-543, Asn-621, and Asn-681 are each glycosylated (N-linked (GlcNAc...) asparagine; by host). Residues 701 to 721 traverse the membrane as a helical segment; that stretch reads MIMLYCSLGVLLLYGLYRLLH. The Intravirion portion of the chain corresponds to 722 to 723; it reads MI.

This sequence belongs to the herpesviridae glycoprotein H family. As to quaternary structure, interacts with glycoprotein L (gL); this interaction is necessary for the correct processing and cell surface expression of gH. The heterodimer gH/gL seems to interact with gB trimers during fusion. Post-translationally, N-glycosylated, O-glycosylated, and sialylated.

It is found in the virion membrane. The protein localises to the host cell membrane. Its subcellular location is the host endosome membrane. The heterodimer glycoprotein H-glycoprotein L is required for the fusion of viral and plasma membranes leading to virus entry into the host cell. Following initial binding to host receptor, membrane fusion is mediated by the fusion machinery composed of gB and the heterodimer gH/gL. May also be involved in the fusion between the virion envelope and the outer nuclear membrane during virion morphogenesis. The sequence is that of Envelope glycoprotein H from Guinea pig cytomegalovirus (strain 22122) (GPCMV).